A 333-amino-acid polypeptide reads, in one-letter code: PRKC apoptosis WT1 regulator protein (333 aa).

Composition is skewed to low complexity over residues methionine 1–threonine 14, proline 33–serine 51, glycine 66–alanine 80, and proline 105–serine 116. Residues methionine 1–glutamate 262 form a disordered region. Residues glutamate 62 to glycine 66 carry the B30.2/SPRY domain-binding motif motif. The Nuclear localization signal motif lies at arginine 138 to arginine 154. The selective for apoptosis induction in cancer cells (SAC) stretch occupies residues arginine 138–alanine 196. Phosphothreonine; by PKA is present on threonine 156. Residues alanine 175 to alanine 185 are compositionally biased toward basic and acidic residues. A compositionally biased stretch (polar residues) spans isoleucine 186–alanine 196. The residue at position 224 (serine 224) is a Phosphoserine. Residues proline 235–aspartate 248 show a composition bias toward basic and acidic residues. Positions phenylalanine 255–arginine 333 form a coiled coil. Positions isoleucine 293–arginine 333 are leucine-zipper.

As to quaternary structure, homooligomer. Interacts (via the C-terminal region) with WT1. Interacts with THAP1. Interacts with AATF. Interacts with BACE1. Interacts with SPSB1 (via B30.2/SPRY domain); this interaction is direct and occurs in association with the Elongin BC complex. Interacts with SPSB2 (via B30.2/SPRY domain); this interaction occurs in association with the Elongin BC complex. Interacts with SPSB4 (via B30.2/SPRY domain); this interaction occurs in association with the Elongin BC complex. Component of a ternary complex composed of SQSTM1 and PRKCZ. Interacts with actin. Post-translationally, preferentially phosphorylated at the Thr-156 by PKC in cancer cells.

It is found in the cytoplasm. The protein localises to the nucleus. Pro-apoptotic protein capable of selectively inducing apoptosis in cancer cells, sensitizing the cells to diverse apoptotic stimuli and causing regression of tumors in animal models. Induces apoptosis in certain cancer cells by activation of the Fas prodeath pathway and coparallel inhibition of NF-kappa-B transcriptional activity. Inhibits the transcriptional activation and augments the transcriptional repression mediated by WT1. Down-regulates the anti-apoptotic protein BCL2 via its interaction with WT1. Also seems to be a transcriptional repressor by itself. May be directly involved in regulating the amyloid precursor protein (APP) cleavage activity of BACE1. This is PRKC apoptosis WT1 regulator protein (Pawr) from Mus musculus (Mouse).